A 246-amino-acid chain; its full sequence is 1-(5-phosphoribosyl)-5-[(5-phosphoribosylamino)methylideneamino] imidazole-4-carboxamide isomerase (246 aa).

Asp-8 functions as the Proton acceptor in the catalytic mechanism. Asp-131 serves as the catalytic Proton donor.

The protein belongs to the HisA/HisF family.

The protein localises to the cytoplasm. The enzyme catalyses 1-(5-phospho-beta-D-ribosyl)-5-[(5-phospho-beta-D-ribosylamino)methylideneamino]imidazole-4-carboxamide = 5-[(5-phospho-1-deoxy-D-ribulos-1-ylimino)methylamino]-1-(5-phospho-beta-D-ribosyl)imidazole-4-carboxamide. The protein operates within amino-acid biosynthesis; L-histidine biosynthesis; L-histidine from 5-phospho-alpha-D-ribose 1-diphosphate: step 4/9. The sequence is that of 1-(5-phosphoribosyl)-5-[(5-phosphoribosylamino)methylideneamino] imidazole-4-carboxamide isomerase from Bordetella petrii (strain ATCC BAA-461 / DSM 12804 / CCUG 43448).